Reading from the N-terminus, the 414-residue chain is Putative F-box/kelch-repeat protein At2g29800 (414 aa).

The segment at methionine 1–arginine 61 is disordered. Basic and acidic residues predominate over residues lysine 20–glutamine 35. The span at asparagine 40–glutamate 54 shows a compositional bias: acidic residues. In terms of domain architecture, F-box spans proline 58–leucine 105. Kelch repeat units follow at residues lysine 163–glycine 211, arginine 212–valine 258, lysine 263–valine 302, and leucine 305–alanine 349.

The protein is Putative F-box/kelch-repeat protein At2g29800 of Arabidopsis thaliana (Mouse-ear cress).